The sequence spans 307 residues: Ribonuclease H2 subunit B (307 aa).

Position 2 is an N-acetylalanine (A2). Position 291 is an N6-acetyllysine (K291). S292 carries the post-translational modification Phosphoserine.

This sequence belongs to the RNase H2 subunit B family. The RNase H2 complex is a heterotrimer composed of the catalytic subunit RNASEH2A and the non-catalytic subunits RNASEH2B and RNASEH2C.

The protein resides in the nucleus. Its function is as follows. Non catalytic subunit of RNase H2, an endonuclease that specifically degrades the RNA of RNA:DNA hybrids. Participates in DNA replication, possibly by mediating the removal of lagging-strand Okazaki fragment RNA primers during DNA replication. Mediates the excision of single ribonucleotides from DNA:RNA duplexes. In Rattus norvegicus (Rat), this protein is Ribonuclease H2 subunit B (Rnaseh2b).